The chain runs to 421 residues: MVDLKRLRQEPEVFHRAIREKGVALDLEALLALDREVQELKKRLQEVQTERNQVAKRVPKAPPEEKEALIARGKALGEEAKRLEEALREKEARLEALLLQVPLPPWPGAPVGGEEANREIKRVGGPPEFSFPPLDHVALMEKNGWWEPRISQVSGSRSYALKGDLALYELALLRFAMDFMARRGFLPMTLPSYAREKAFLGTGHFPAYRDQVWAIAETDLYLTGTAEVVLNALHSGEILPYEALPLRYAGYAPAFRSEAGSFGKDVRGLMRVHQFHKVEQYVLTEASLEASDRAFQELLENAEEILRLLELPYRLVEVATGDMGPGKWRQVDIEVYLPSEGRYRETHSCSALLDWQARRANLRYRDPEGRVRYAYTLNNTALATPRILAMLLENHQLQDGRVRVPQALIPYMGKEVLEPCG.

Residue 225-227 (TAE) coordinates L-serine. Residues 256–258 (RSE) and valine 272 contribute to the ATP site. Glutamate 279 contributes to the L-serine binding site. Residue 345–348 (ETHS) participates in ATP binding. Threonine 380 is an L-serine binding site.

This sequence belongs to the class-II aminoacyl-tRNA synthetase family. Type-1 seryl-tRNA synthetase subfamily. Homodimer. A single tRNA molecule binds across the dimer.

It localises to the cytoplasm. It carries out the reaction tRNA(Ser) + L-serine + ATP = L-seryl-tRNA(Ser) + AMP + diphosphate + H(+). The enzyme catalyses tRNA(Sec) + L-serine + ATP = L-seryl-tRNA(Sec) + AMP + diphosphate + H(+). It participates in aminoacyl-tRNA biosynthesis; selenocysteinyl-tRNA(Sec) biosynthesis; L-seryl-tRNA(Sec) from L-serine and tRNA(Sec): step 1/1. Catalyzes the attachment of serine to tRNA(Ser). Is also probably able to aminoacylate tRNA(Sec) with serine, to form the misacylated tRNA L-seryl-tRNA(Sec), which will be further converted into selenocysteinyl-tRNA(Sec). This Thermus thermophilus (strain ATCC BAA-163 / DSM 7039 / HB27) protein is Serine--tRNA ligase (serS).